We begin with the raw amino-acid sequence, 51 residues long: Large ribosomal subunit protein eL39x (51 aa).

The protein belongs to the eukaryotic ribosomal protein eL39 family.

The chain is Large ribosomal subunit protein eL39x (RPL39C) from Oryza sativa subsp. japonica (Rice).